We begin with the raw amino-acid sequence, 571 residues long: Coenzyme A biosynthesis protein 3 (571 aa).

Disordered stretches follow at residues methionine 1–aspartate 72 and isoleucine 100–proline 120. Residues serine 8 to threonine 35 show a composition bias toward polar residues. Serine 42 is modified (phosphoserine). A compositionally biased stretch (basic and acidic residues) spans isoleucine 43 to serine 59. A compositionally biased stretch (polar residues) spans lysine 60–aspartate 72. Serine 116, serine 121, and serine 124 each carry phosphoserine. Disordered regions lie at residues isoleucine 140 to glutamine 171 and isoleucine 209 to lysine 244. The span at lysine 146–glutamine 171 shows a compositional bias: low complexity. The residue at position 264 (serine 264) is a Phosphoserine. The tract at residues arginine 507–valine 571 is disordered. The segment covering glutamine 516 to valine 571 has biased composition (acidic residues).

The protein belongs to the HFCD (homooligomeric flavin containing Cys decarboxylase) superfamily. Component of the phosphopantothenoylcysteine decarboxylase (PPCDC) complex, a heterotrimer composed of CAB3, HAL3 and VHS3.

It is found in the cytoplasm. Its function is as follows. Component of the phosphopantothenoylcysteine decarboxylase (PPCDC) involved in the coenzyme A synthesis. This Saccharomyces cerevisiae (strain ATCC 204508 / S288c) (Baker's yeast) protein is Coenzyme A biosynthesis protein 3 (CAB3).